The chain runs to 782 residues: Endonuclease MutS2 (782 aa).

Residue 336–343 (GPNTGGKT) coordinates ATP. The 76-residue stretch at 707–782 (LDLRGYRYEE…GFGVTVAELK (76 aa)) folds into the Smr domain.

This sequence belongs to the DNA mismatch repair MutS family. MutS2 subfamily. In terms of assembly, homodimer. Binds to stalled ribosomes, contacting rRNA.

Functionally, endonuclease that is involved in the suppression of homologous recombination and thus may have a key role in the control of bacterial genetic diversity. Acts as a ribosome collision sensor, splitting the ribosome into its 2 subunits. Detects stalled/collided 70S ribosomes which it binds and splits by an ATP-hydrolysis driven conformational change. Acts upstream of the ribosome quality control system (RQC), a ribosome-associated complex that mediates the extraction of incompletely synthesized nascent chains from stalled ribosomes and their subsequent degradation. Probably generates substrates for RQC. This chain is Endonuclease MutS2, found in Staphylococcus carnosus (strain TM300).